The following is a 267-amino-acid chain: 3-methyl-2-oxobutanoate hydroxymethyltransferase (267 aa).

2 residues coordinate Mg(2+): D42 and D86. 3-methyl-2-oxobutanoate contacts are provided by residues 42 to 43 (DS), D86, and K116. Position 118 (E118) interacts with Mg(2+). E185 acts as the Proton acceptor in catalysis.

This sequence belongs to the PanB family. As to quaternary structure, homodecamer; pentamer of dimers. Mg(2+) is required as a cofactor.

Its subcellular location is the cytoplasm. The catalysed reaction is 3-methyl-2-oxobutanoate + (6R)-5,10-methylene-5,6,7,8-tetrahydrofolate + H2O = 2-dehydropantoate + (6S)-5,6,7,8-tetrahydrofolate. It participates in cofactor biosynthesis; (R)-pantothenate biosynthesis; (R)-pantoate from 3-methyl-2-oxobutanoate: step 1/2. Its function is as follows. Catalyzes the reversible reaction in which hydroxymethyl group from 5,10-methylenetetrahydrofolate is transferred onto alpha-ketoisovalerate to form ketopantoate. The polypeptide is 3-methyl-2-oxobutanoate hydroxymethyltransferase (Parasynechococcus marenigrum (strain WH8102)).